An 823-amino-acid polypeptide reads, in one-letter code: DNA ligase (823 aa).

NAD(+) contacts are provided by residues 31 to 35 (DDAFD) and 73 to 74 (SQ). K100 functions as the N6-AMP-lysine intermediate in the catalytic mechanism. R121, E163, K275, and K296 together coordinate NAD(+). C387, C390, C403, and C408 together coordinate Zn(2+). BRCT domains lie at 562-655 (QAES…TGET), 654-742 (ETVH…DAHV), and 741-823 (HVHA…TPGT).

It belongs to the NAD-dependent DNA ligase family. LigA subfamily. Mg(2+) is required as a cofactor. The cofactor is Mn(2+).

It catalyses the reaction NAD(+) + (deoxyribonucleotide)n-3'-hydroxyl + 5'-phospho-(deoxyribonucleotide)m = (deoxyribonucleotide)n+m + AMP + beta-nicotinamide D-nucleotide.. DNA ligase that catalyzes the formation of phosphodiester linkages between 5'-phosphoryl and 3'-hydroxyl groups in double-stranded DNA using NAD as a coenzyme and as the energy source for the reaction. It is essential for DNA replication and repair of damaged DNA. The protein is DNA ligase of Treponema pallidum (strain Nichols).